Consider the following 92-residue polypeptide: Large ribosomal subunit protein eL43 (92 aa).

Residues 39-60 (CEFCGKFAVKRKAVGIWGCKDC) form a C4-type zinc finger.

This sequence belongs to the eukaryotic ribosomal protein eL43 family.

In Pseudotsuga menziesii (Douglas-fir), this protein is Large ribosomal subunit protein eL43 (RPL37A).